The chain runs to 572 residues: Asparagine synthetase [glutamine-hydrolyzing] 1 (572 aa).

Residue Cys2 is the For GATase activity of the active site. Positions 2–186 constitute a Glutamine amidotransferase type-2 domain; it reads CGIFAAFRHE…PGHVYDSKTD (185 aa). L-glutamine-binding positions include 49–53, 74–76, and Asp97; these read RLAIV and NGE. The region spanning 194–546 is the Asparagine synthetase domain; it reads PDWLDEKRIP…QKTVADTVMR (353 aa). Leu233 serves as a coordination point for ATP. A Phosphoserine modification is found at Ser265. ATP contacts are provided by residues Ile292 and 366–367; that span reads SG. Ser509 bears the Phosphoserine mark.

The enzyme catalyses L-aspartate + L-glutamine + ATP + H2O = L-asparagine + L-glutamate + AMP + diphosphate + H(+). It functions in the pathway amino-acid biosynthesis; L-asparagine biosynthesis; L-asparagine from L-aspartate (L-Gln route): step 1/1. The protein is Asparagine synthetase [glutamine-hydrolyzing] 1 (ASN1) of Saccharomyces cerevisiae (strain ATCC 204508 / S288c) (Baker's yeast).